Consider the following 253-residue polypeptide: Carboxy-S-adenosyl-L-methionine synthase (253 aa).

S-adenosyl-L-methionine is bound by residues tyrosine 49, 74–76 (GCS), 98–99 (DN), and asparagine 141.

This sequence belongs to the class I-like SAM-binding methyltransferase superfamily. Cx-SAM synthase family.

The enzyme catalyses prephenate + S-adenosyl-L-methionine = carboxy-S-adenosyl-L-methionine + 3-phenylpyruvate + H2O. In terms of biological role, catalyzes the conversion of S-adenosyl-L-methionine (SAM) to carboxy-S-adenosyl-L-methionine (Cx-SAM). The polypeptide is Carboxy-S-adenosyl-L-methionine synthase (Trichodesmium erythraeum (strain IMS101)).